Consider the following 149-residue polypeptide: UPF0260 protein Pfl01_1392 (149 aa).

Belongs to the UPF0260 family.

In Pseudomonas fluorescens (strain Pf0-1), this protein is UPF0260 protein Pfl01_1392.